The primary structure comprises 303 residues: Glycine--tRNA ligase alpha subunit (303 aa).

This sequence belongs to the class-II aminoacyl-tRNA synthetase family. Tetramer of two alpha and two beta subunits.

Its subcellular location is the cytoplasm. The enzyme catalyses tRNA(Gly) + glycine + ATP = glycyl-tRNA(Gly) + AMP + diphosphate. This is Glycine--tRNA ligase alpha subunit from Klebsiella pneumoniae (strain 342).